A 112-amino-acid polypeptide reads, in one-letter code: uncharacterized protein (112 aa).

The next 3 membrane-spanning stretches (helical) occupy residues 33–53 (PSPL…PFGA), 58–78 (LYIY…NVCT), and 91–111 (CVYV…LLFV).

Its subcellular location is the membrane. This is an uncharacterized protein from Saccharomyces cerevisiae (strain ATCC 204508 / S288c) (Baker's yeast).